The chain runs to 561 residues: Zinc finger protein with KRAB and SCAN domains 1 (561 aa).

The tract at residues 1–51 is disordered; it reads MMTAESRETTGLSPQAAQEKDGIVIVKVEEEDEEDHMWGQDSSLQETPPPD. Ser-13 is modified (phosphoserine). Lys-27 participates in a covalent cross-link: Glycyl lysine isopeptide (Lys-Gly) (interchain with G-Cter in SUMO2). The SCAN box domain occupies 56–138; sequence RQRFRRFCYQ…TLLEDLELDL (83 aa). Residues 163-187 are disordered; that stretch reads VQESSSFDHHETAQSHFKHSSRKPR. The segment covering 178–187 has biased composition (basic residues); that stretch reads HFKHSSRKPR. Glycyl lysine isopeptide (Lys-Gly) (interchain with G-Cter in SUMO2) cross-links involve residues Lys-180 and Lys-226. The KRAB domain maps to 225–304; sequence VKIEDMAVSL…QKEFGEKREQ (80 aa). Over residues 260–275 the composition is skewed to polar residues; that stretch reads NVFSQGSENRNGNEST. The tract at residues 260–372 is disordered; it reads NVFSQGSENR…NTPEEAPSGA (113 aa). Composition is skewed to basic and acidic residues over residues 276-286 and 294-349; these read SKAEVKEDSTS and FQKE…EKGK. Residues Lys-277, Lys-296, Lys-301, and Lys-336 each participate in a glycyl lysine isopeptide (Lys-Gly) (interchain with G-Cter in SUMO2) cross-link. Residues 355-365 show a composition bias toward polar residues; it reads FSLSANFNNTP. Residue Lys-373 forms a Glycyl lysine isopeptide (Lys-Gly) (interchain with G-Cter in SUMO2) linkage. 6 C2H2-type zinc fingers span residues 375 to 397, 403 to 425, 431 to 453, 459 to 481, 487 to 509, and 515 to 537; these read HRCD…KIIH, YECN…QRIH, HECN…QRIH, YECS…RRIH, and YKCT…HRIH. Residues Lys-410, Lys-438, and Lys-476 each participate in a glycyl lysine isopeptide (Lys-Gly) (interchain with G-Cter in SUMO2) cross-link. Lys-558 is covalently cross-linked (Glycyl lysine isopeptide (Lys-Gly) (interchain with G-Cter in SUMO2)).

This sequence belongs to the krueppel C2H2-type zinc-finger protein family.

The protein localises to the nucleus. In terms of biological role, may be involved in transcriptional regulation. The chain is Zinc finger protein with KRAB and SCAN domains 1 (Zkscan1) from Mus musculus (Mouse).